A 255-amino-acid chain; its full sequence is uncharacterized protein (255 aa).

The segment covering 1–10 (MSDSIHRRKV) has biased composition (basic residues). The tract at residues 1-78 (MSDSIHRRKV…SPMRGLPMEE (78 aa)) is disordered. A compositionally biased stretch (basic and acidic residues) spans 44–61 (VFERSFSEPSLNRHRDGQ).

This is an uncharacterized protein from Arabidopsis thaliana (Mouse-ear cress).